The primary structure comprises 122 residues: Large ribosomal subunit protein uL14 (122 aa).

It belongs to the universal ribosomal protein uL14 family. Part of the 50S ribosomal subunit. Forms a cluster with proteins L3 and L19. In the 70S ribosome, L14 and L19 interact and together make contacts with the 16S rRNA in bridges B5 and B8.

Binds to 23S rRNA. Forms part of two intersubunit bridges in the 70S ribosome. This Bradyrhizobium diazoefficiens (strain JCM 10833 / BCRC 13528 / IAM 13628 / NBRC 14792 / USDA 110) protein is Large ribosomal subunit protein uL14.